The following is a 149-amino-acid chain: MSSNKIVLSSSDGESFEVEEAVARKLKIVEHMIEDDCVVTEVPLQNVTGKILSIVVEYCKKHVVDEESDEFKTWDEEFMKKFDQPTVFQLLLAANYLNIKGLLDLSAQTVADRIKDKTPEEIREIFNIENDFTPEEEAAVRKENAWAFE.

Positions 91 to 149 are interaction with the F-box domain of F-box proteins; sequence LLAANYLNIKGLLDLSAQTVADRIKDKTPEEIREIFNIENDFTPEEEAAVRKENAWAFE.

It belongs to the SKP1 family. In terms of assembly, part of a SCF (SKP1-cullin-F-box) protein ligase complex. Interacts with CPR1/CPR30, At3g61590, At4g39550 and At5g49610. As to expression, restricted to inflorescences, pollen and leaves.

The protein resides in the nucleus. It functions in the pathway protein modification; protein ubiquitination. Functionally, involved in ubiquitination and subsequent proteasomal degradation of target proteins. Together with CUL1, RBX1 and a F-box protein, it forms a SCF E3 ubiquitin ligase complex. The functional specificity of this complex depends on the type of F-box protein. In the SCF complex, it serves as an adapter that links the F-box protein to CUL1. The protein is SKP1-like protein 14 (ASK14) of Arabidopsis thaliana (Mouse-ear cress).